The following is a 204-amino-acid chain: Leucyl/phenylalanyl-tRNA--protein transferase (204 aa).

Belongs to the L/F-transferase family.

It localises to the cytoplasm. The enzyme catalyses N-terminal L-lysyl-[protein] + L-leucyl-tRNA(Leu) = N-terminal L-leucyl-L-lysyl-[protein] + tRNA(Leu) + H(+). It carries out the reaction N-terminal L-arginyl-[protein] + L-leucyl-tRNA(Leu) = N-terminal L-leucyl-L-arginyl-[protein] + tRNA(Leu) + H(+). The catalysed reaction is L-phenylalanyl-tRNA(Phe) + an N-terminal L-alpha-aminoacyl-[protein] = an N-terminal L-phenylalanyl-L-alpha-aminoacyl-[protein] + tRNA(Phe). Its function is as follows. Functions in the N-end rule pathway of protein degradation where it conjugates Leu, Phe and, less efficiently, Met from aminoacyl-tRNAs to the N-termini of proteins containing an N-terminal arginine or lysine. The sequence is that of Leucyl/phenylalanyl-tRNA--protein transferase from Rhizobium meliloti (strain 1021) (Ensifer meliloti).